A 570-amino-acid polypeptide reads, in one-letter code: Dihydroxy-acid dehydratase (570 aa).

Position 61 (Cys61) interacts with [2Fe-2S] cluster. Position 94 (Asp94) interacts with Mg(2+). Cys135 serves as a coordination point for [2Fe-2S] cluster. Positions 136 and 137 each coordinate Mg(2+). Lys137 carries the post-translational modification N6-carboxylysine. Position 207 (Cys207) interacts with [2Fe-2S] cluster. Residue Glu459 participates in Mg(2+) binding. Ser485 functions as the Proton acceptor in the catalytic mechanism.

The protein belongs to the IlvD/Edd family. In terms of assembly, homodimer. The cofactor is [2Fe-2S] cluster. Mg(2+) serves as cofactor.

The catalysed reaction is (2R)-2,3-dihydroxy-3-methylbutanoate = 3-methyl-2-oxobutanoate + H2O. It catalyses the reaction (2R,3R)-2,3-dihydroxy-3-methylpentanoate = (S)-3-methyl-2-oxopentanoate + H2O. Its pathway is amino-acid biosynthesis; L-isoleucine biosynthesis; L-isoleucine from 2-oxobutanoate: step 3/4. The protein operates within amino-acid biosynthesis; L-valine biosynthesis; L-valine from pyruvate: step 3/4. Functions in the biosynthesis of branched-chain amino acids. Catalyzes the dehydration of (2R,3R)-2,3-dihydroxy-3-methylpentanoate (2,3-dihydroxy-3-methylvalerate) into 2-oxo-3-methylpentanoate (2-oxo-3-methylvalerate) and of (2R)-2,3-dihydroxy-3-methylbutanoate (2,3-dihydroxyisovalerate) into 2-oxo-3-methylbutanoate (2-oxoisovalerate), the penultimate precursor to L-isoleucine and L-valine, respectively. The protein is Dihydroxy-acid dehydratase of Lactococcus lactis subsp. lactis (strain IL1403) (Streptococcus lactis).